The chain runs to 144 residues: Ribonuclease VapC45 (144 aa).

Mg(2+) contacts are provided by aspartate 7 and aspartate 102.

Belongs to the PINc/VapC protein family. The cofactor is Mg(2+).

Functionally, toxic component of a type II toxin-antitoxin (TA) system. An RNase. Its cognate antitoxin is VapB45. The chain is Ribonuclease VapC45 from Mycobacterium tuberculosis (strain CDC 1551 / Oshkosh).